Here is a 441-residue protein sequence, read N- to C-terminus: MGVGSSLRMQLTAQKPRVDRFVVPRYSLPEIHRRMTWSDRCEKYNGEIWSSKYLQQKRYINFLDEAFGLAPLKAQQRNSDTFDDWCWPCAPRKKSYLSTADNVLDLPSYSITSFPDVLDWSHDDILVAALGKKYHKWSWRTQSPVDQGQTMFDIRCCKFDPKGKRLLLGTDMRVEVHNELSKCQFVQYCKCNIQICTITAIDWSPTGNSFVTGCSRGRICAMNEKDFPIKSLVLIEGAMLVVKISPNARYVAVAGVHKHRVWILSWPDLIRFRFMKTNEIVKDLNWHPWQTALLGVATLSSDRHASMIIWEPHATDKLRQQDVGRGRYSIDAMRFNNKTGELLLSLWSLDVNVPYPKSSELVVMSNFDTVVDHWGESHTGLNRIRTMVFSPDGTKLATATADEDLIIWNFLPNDYKKILARKKFTAFPQFLDICSYGYTIR.

WD repeat units follow at residues Ser-110–Gly-148, Gln-149–Gln-187, Ile-193–Val-233, Ile-235–Lys-276, Thr-277–Gln-320, Ser-345–Thr-379, and Gly-380–Ala-420. Residues Thr-379–Ser-390 carry the D-box motif.

This sequence belongs to the WD repeat CORT family.

Its subcellular location is the cytoplasm. Functionally, controls wing pigmentation patterning, possibly by regulating scale cell development. Probably acts as an activator of the anaphase promoting complex/cyclosome (APC/C) that promotes the ubiquitin ligase activity and substrate specificity of the APC/C. The sequence is that of Protein cortex from Biston betularia (Pepper-and-salt geometer moth).